An 88-amino-acid chain; its full sequence is Putative membrane protein insertion efficiency factor (88 aa).

The protein belongs to the UPF0161 family.

It is found in the cell inner membrane. In terms of biological role, could be involved in insertion of integral membrane proteins into the membrane. This is Putative membrane protein insertion efficiency factor from Burkholderia vietnamiensis (strain G4 / LMG 22486) (Burkholderia cepacia (strain R1808)).